Reading from the N-terminus, the 155-residue chain is Large ribosomal subunit protein uL22 (155 aa).

It belongs to the universal ribosomal protein uL22 family. Part of the 50S ribosomal subunit.

Functionally, this protein binds specifically to 23S rRNA. It makes multiple contacts with different domains of the 23S rRNA in the assembled 50S subunit and ribosome. The globular domain of the protein is located near the polypeptide exit tunnel on the outside of the subunit, while an extended beta-hairpin is found that lines the wall of the exit tunnel in the center of the 70S ribosome. In Pyrococcus horikoshii (strain ATCC 700860 / DSM 12428 / JCM 9974 / NBRC 100139 / OT-3), this protein is Large ribosomal subunit protein uL22.